The sequence spans 322 residues: ADP,ATP carrier protein (322 aa).

Solcar repeat units follow at residues 25 to 118, 130 to 222, and 230 to 316; these read STFF…FKKM, KWFA…LKPV, and GNFL…VQLL. Helical transmembrane passes span 27–54, 95–119, 128–148, 198–219, and 233–253; these read FFFDFMMGGVSAAVSKTAAAPIERVKLL, TANVLRYFPTQALNFAFKDKFKKMF, YAKWFAGNLASGGAAGAASLL, FGPSVVGIVVYRGLYFGMYDTL, and LASFLLGWAVTTGSGVASYPL. ADP contacts are provided by R100 and K112. R257 lines the ADP pocket. An important for transport activity region spans residues 257–262; that stretch reads RRRMMM. The Nucleotide carrier signature motif signature appears at 257 to 262; it reads RRRMMM. A helical membrane pass occupies residues 293–313; that stretch reads AGANILRGVAGAGVLSIYDQV.

It belongs to the mitochondrial carrier (TC 2.A.29) family. Monomer.

It localises to the mitochondrion inner membrane. It catalyses the reaction ADP(in) + ATP(out) = ADP(out) + ATP(in). With respect to regulation, the matrix-open state (m-state) is inhibited by the membrane-permeable bongkrekic acid (BKA). The cytoplasmic-open state (c-state) is inhibited by the membrane-impermeable toxic inhibitor carboxyatractyloside (CATR). Functionally, ADP:ATP antiporter that mediates import of ADP into the mitochondrial matrix for ATP synthesis, and export of ATP out to fuel the cell. Cycles between the cytoplasmic-open state (c-state) and the matrix-open state (m-state): operates by the alternating access mechanism with a single substrate-binding site intermittently exposed to either the cytosolic (c-state) or matrix (m-state) side of the inner mitochondrial membrane. The chain is ADP,ATP carrier protein (anc1) from Schizosaccharomyces pombe (strain 972 / ATCC 24843) (Fission yeast).